Reading from the N-terminus, the 163-residue chain is Large ribosomal subunit protein uL15 (163 aa).

Gly residues predominate over residues 27–37 (SGLGKTAGRGQ). The segment at 27 to 46 (SGLGKTAGRGQKGQKSRSGV) is disordered.

The protein belongs to the universal ribosomal protein uL15 family. In terms of assembly, part of the 50S ribosomal subunit.

Functionally, binds to the 23S rRNA. The protein is Large ribosomal subunit protein uL15 of Zymomonas mobilis subsp. mobilis (strain ATCC 31821 / ZM4 / CP4).